The chain runs to 185 residues: Adenine phosphoribosyltransferase (185 aa).

It belongs to the purine/pyrimidine phosphoribosyltransferase family. Homodimer.

The protein localises to the cytoplasm. It carries out the reaction AMP + diphosphate = 5-phospho-alpha-D-ribose 1-diphosphate + adenine. The protein operates within purine metabolism; AMP biosynthesis via salvage pathway; AMP from adenine: step 1/1. Functionally, catalyzes a salvage reaction resulting in the formation of AMP, that is energically less costly than de novo synthesis. In Pectobacterium carotovorum subsp. carotovorum (strain PC1), this protein is Adenine phosphoribosyltransferase.